Reading from the N-terminus, the 124-residue chain is Holo-[acyl-carrier-protein] synthase (124 aa).

Mg(2+) is bound by residues aspartate 7 and glutamate 55.

It belongs to the P-Pant transferase superfamily. AcpS family. Requires Mg(2+) as cofactor.

The protein resides in the cytoplasm. It carries out the reaction apo-[ACP] + CoA = holo-[ACP] + adenosine 3',5'-bisphosphate + H(+). Its function is as follows. Transfers the 4'-phosphopantetheine moiety from coenzyme A to a Ser of acyl-carrier-protein. This is Holo-[acyl-carrier-protein] synthase from Borrelia garinii subsp. bavariensis (strain ATCC BAA-2496 / DSM 23469 / PBi) (Borreliella bavariensis).